The following is a 334-amino-acid chain: Spermidine synthase 1 (334 aa).

Over residues 1–16 the composition is skewed to basic and acidic residues; it reads MDAKETSATDLKRPRE. The disordered stretch occupies residues 1-35; that stretch reads MDAKETSATDLKRPREEDDNGGAATMETENGDQKK. The PABS domain occupies 45–282; it reads PGWFSEMSPM…GVIGFMLCST (238 aa). Glutamine 76 is a binding site for S-adenosyl 3-(methylsulfanyl)propylamine. Tyrosine 106 contributes to the putrescine binding site. S-adenosyl 3-(methylsulfanyl)propylamine is bound by residues glutamine 107, aspartate 131, glutamate 151, 182-183, and aspartate 201; that span reads DG. The Proton acceptor role is filled by aspartate 201. Putrescine is bound by residues 201 to 204 and tyrosine 270; that span reads DSSD.

It belongs to the spermidine/spermine synthase family. As to quaternary structure, homotetramer and heterodimer. Component of a multiprotein complex. Interacts with SPMS and SPDSYN2.

The enzyme catalyses S-adenosyl 3-(methylsulfanyl)propylamine + putrescine = S-methyl-5'-thioadenosine + spermidine + H(+). The protein operates within amine and polyamine biosynthesis; spermidine biosynthesis; spermidine from putrescine: step 1/1. This Arabidopsis thaliana (Mouse-ear cress) protein is Spermidine synthase 1 (SPDSYN1).